The following is a 121-amino-acid chain: Griffithsin (121 aa).

Positions 1-120 (SLTHRKFGGS…LDSLDIYYEQ (120 aa)) constitute a Jacalin-type lectin domain.

Its function is as follows. Mixed specificity lectin with anti-HIV activity. Binds to HIV envelope glycoproteins, including exterior membrane glycoprotein gp120, and inhibits viral entry into cells. Binding to gp120 is dependent on gp120 being glycosylated, and is inhibited by mannose, glucose and N-acetylglucosamine. The chain is Griffithsin from Griffithsia sp. (strain Q66D336) (Red alga).